A 93-amino-acid chain; its full sequence is Small ribosomal subunit protein uS19 (93 aa).

This sequence belongs to the universal ribosomal protein uS19 family.

Functionally, protein S19 forms a complex with S13 that binds strongly to the 16S ribosomal RNA. The chain is Small ribosomal subunit protein uS19 from Campylobacter jejuni subsp. jejuni serotype O:6 (strain 81116 / NCTC 11828).